A 483-amino-acid polypeptide reads, in one-letter code: Galactose-3-O-sulfotransferase 4 (483 aa).

Residues 1-18 are Cytoplasmic-facing; that stretch reads MGVLSPTRTMRLWGPRSL. A helical; Signal-anchor for type II membrane protein membrane pass occupies residues 19 to 39; sequence GVALGVFMTIGFALQLLGGPF. Over 40 to 483 the chain is Lumenal; sequence QRRLPGLQLR…PLKTSRRPSP (444 aa). Positions 225–248 are disordered; that stretch reads KRGNPHVSRDPNPPQLPSGAGPPA. Residue N371 is glycosylated (N-linked (GlcNAc...) asparagine).

Belongs to the galactose-3-O-sulfotransferase family. It depends on Mn(2+) as a cofactor.

The protein resides in the golgi apparatus. The protein localises to the golgi stack membrane. It participates in protein modification; carbohydrate sulfation. In terms of biological role, catalyzes the transfer of sulfate to beta-1,3-linked galactose residues in O-linked glycoproteins. Good substrates include asialofetuin, Gal-beta-1,3-GalNAc and Gal-beta-1,3 (GlcNAc-beta-1,6)GalNAc. The polypeptide is Galactose-3-O-sulfotransferase 4 (GAL3ST4) (Bos taurus (Bovine)).